A 782-amino-acid polypeptide reads, in one-letter code: Transcription factor SOX-30 (782 aa).

Disordered stretches follow at residues 1–37 (MERA…AQPV), 95–117 (LPPG…AAAA), and 139–226 (PPQS…DALK). Composition is skewed to pro residues over residues 7 to 35 (EPPP…PPAQ) and 97 to 106 (PGGPGVPPAP). Residues 203-226 (LDGRRSDEKKAKLEAEEAPRDALK) show a composition bias toward basic and acidic residues. Positions 366–434 (VKRPMNAFMV…KHREEFPGWV (69 aa)) form a DNA-binding region, HMG box. Disordered regions lie at residues 501-604 (PTPA…STCP), 704-724 (YPDE…DGPP), and 756-782 (ASAP…LRNL). Polar residues predominate over residues 512–522 (TLFQPSVSSTG). Over residues 525–538 (AVPPPSLTPRPSLP) the composition is skewed to pro residues. Polar residues predominate over residues 555–574 (SGSSRSVKRSTPGSLESTTR). Residues 704–718 (YPDEHTHSEDSRSCE) show a composition bias toward basic and acidic residues.

In terms of assembly, interacts with CTNNB1, competitively inhibiting CTNNB1-TCF7L2/TCF4 interaction. Expressed in the lung (at protein level). Expressed in testes (at protein level). Expressed in preleptotene spermatocytes, round spermatids, and elongated spermatids in the testis (at protein level). Expressed in pachytene spermatocytes during stages 3 to 8 of spermatogenesis (at protein level). Increased expression in diplotene spermatocytes at stage 9-11 and in metaphase spermatocytes or secondary spermatocytes at stage 12. Expressed in ovaries.

Its subcellular location is the nucleus. It is found in the cytoplasm. In terms of biological role, acts both as a transcriptional activator and a repressor. Binds to the DNA sequence 5'-ACAAT-3' and shows a preference for guanine residues surrounding this core motif. Binds to its own promoter and activates its own transcription. Required to activate the expression of postmeiotic genes involved in spermiogenesis. Binds to the promoter region of CTNNB1 and represses its transcription which leads to inhibition of Wnt signaling. Also inhibits Wnt signaling by binding to the CTNNB1 protein, preventing interaction of CTNNB1 with TCF7L2/TCF4. The protein is Transcription factor SOX-30 (Sox30) of Mus musculus (Mouse).